The primary structure comprises 288 residues: Damage-control phosphatase AF_1104 (288 aa).

The Subfamily I CxxC motif signature appears at 7–10 (CPSC). Residues Asp160, Asn161, and Asp194 each contribute to the Mn(2+) site. A Subfamily I GNFE-like motif motif is present at residues 247–250 (ANYE). A Subfamily I KC motif motif is present at residues 267 to 268 (KC).

It belongs to the damage-control phosphatase family. Nucleotides phosphatase I subfamily. It depends on [2Fe-2S] cluster as a cofactor. Requires Mn(2+) as cofactor. Ni(2+) is required as a cofactor.

Its function is as follows. Metal-dependent phosphatase with probable damage-control functions. Could hydrolyze oxidatively damaged purine nucleotides or their biosynthetic intermediates. The sequence is that of Damage-control phosphatase AF_1104 from Archaeoglobus fulgidus (strain ATCC 49558 / DSM 4304 / JCM 9628 / NBRC 100126 / VC-16).